We begin with the raw amino-acid sequence, 394 residues long: Phosphoglycerate kinase (394 aa).

Substrate contacts are provided by residues D21–N23, R37, H60–R63, R115, and R148. ATP is bound by residues K199, E321, and G347–T350.

This sequence belongs to the phosphoglycerate kinase family. In terms of assembly, monomer.

Its subcellular location is the cytoplasm. It catalyses the reaction (2R)-3-phosphoglycerate + ATP = (2R)-3-phospho-glyceroyl phosphate + ADP. It functions in the pathway carbohydrate degradation; glycolysis; pyruvate from D-glyceraldehyde 3-phosphate: step 2/5. The sequence is that of Phosphoglycerate kinase from Aromatoleum aromaticum (strain DSM 19018 / LMG 30748 / EbN1) (Azoarcus sp. (strain EbN1)).